Here is a 71-residue protein sequence, read N- to C-terminus: MANPISIDTEMITLGQFLKLADVIQSGGMAKWFLSEHEVLVNDEPDNRRGRKLYVGDVVEIEGFGSFQVVN.

The S4 RNA-binding domain maps to 12 to 69 (ITLGQFLKLADVIQSGGMAKWFLSEHEVLVNDEPDNRRGRKLYVGDVVEIEGFGSFQV).

May assist in the assembly of the 50S subunit. The sequence is that of Probable ribosome maturation protein RlbA from Bacillus subtilis (strain 168).